The primary structure comprises 382 residues: 2-carboxy-1,4-naphthoquinone phytyltransferase, chloroplastic (382 aa).

Residues 1–66 (MVNFVSLCDI…RRNLRVRPIF (66 aa)) constitute a chloroplast transit peptide. 8 helical membrane passes run 99-119 (VALV…GLFL), 123-143 (YVTL…SNDV), 168-188 (TLAA…WTSL), 196-216 (ILLL…PFRL), 224-244 (PLCF…LLGS), 257-277 (VLSS…CSHF), 323-343 (ILPL…NLVS), and 361-381 (YYCV…LVIA).

Belongs to the MenA family. Type 2 subfamily.

The protein resides in the plastid. Its subcellular location is the chloroplast membrane. It carries out the reaction 2-carboxy-1,4-naphthoquinone + phytyl diphosphate + H(+) = demethylphylloquinone + CO2 + diphosphate. Functionally, involved in the synthesis of phylloquinone (vitamin K1). Catalyzes the transfer of a prenyl chain to 2-carboxy-1,4-naphthoquinone. The protein is 2-carboxy-1,4-naphthoquinone phytyltransferase, chloroplastic (ABC4) of Arabidopsis thaliana (Mouse-ear cress).